A 303-amino-acid chain; its full sequence is GTPase Era (303 aa).

Residues 8-176 (YCGFIAIVGR…ASIVRKHMPE (169 aa)) form the Era-type G domain. The interval 16-23 (GRPNVGKS) is G1. 16–23 (GRPNVGKS) provides a ligand contact to GTP. The interval 42-46 (QTTRH) is G2. Residues 63–66 (DTPG) are G3. GTP-binding positions include 63-67 (DTPGL) and 125-128 (NKVD). Residues 125-128 (NKVD) form a G4 region. The G5 stretch occupies residues 155 to 157 (ISA). Positions 207-284 (LGEELPYSVT…HLELWVKVKS (78 aa)) constitute a KH type-2 domain.

Belongs to the TRAFAC class TrmE-Era-EngA-EngB-Septin-like GTPase superfamily. Era GTPase family. In terms of assembly, monomer.

The protein resides in the cytoplasm. Its subcellular location is the cell inner membrane. Its function is as follows. An essential GTPase that binds both GDP and GTP, with rapid nucleotide exchange. Plays a role in 16S rRNA processing and 30S ribosomal subunit biogenesis and possibly also in cell cycle regulation and energy metabolism. This is GTPase Era from Yersinia enterocolitica serotype O:8 / biotype 1B (strain NCTC 13174 / 8081).